The primary structure comprises 241 residues: uncharacterized protein (241 aa).

The protein localises to the cytoplasm. The protein resides in the nucleus. This is an uncharacterized protein from Schizosaccharomyces pombe (strain 972 / ATCC 24843) (Fission yeast).